A 929-amino-acid polypeptide reads, in one-letter code: Isoleucine--tRNA ligase (929 aa).

Positions 58–68 (PYANGDIHIGH) match the 'HIGH' region motif. Position 563 (Glu563) interacts with L-isoleucyl-5'-AMP. The 'KMSKS' region motif lies at 605-609 (KMSKS). Lys608 serves as a coordination point for ATP. Zn(2+) is bound by residues Cys892, Cys895, Cys912, and Cys915.

This sequence belongs to the class-I aminoacyl-tRNA synthetase family. IleS type 1 subfamily. In terms of assembly, monomer. It depends on Zn(2+) as a cofactor.

Its subcellular location is the cytoplasm. It catalyses the reaction tRNA(Ile) + L-isoleucine + ATP = L-isoleucyl-tRNA(Ile) + AMP + diphosphate. Its function is as follows. Catalyzes the attachment of isoleucine to tRNA(Ile). As IleRS can inadvertently accommodate and process structurally similar amino acids such as valine, to avoid such errors it has two additional distinct tRNA(Ile)-dependent editing activities. One activity is designated as 'pretransfer' editing and involves the hydrolysis of activated Val-AMP. The other activity is designated 'posttransfer' editing and involves deacylation of mischarged Val-tRNA(Ile). This is Isoleucine--tRNA ligase from Neisseria meningitidis serogroup C (strain 053442).